Here is a 328-residue protein sequence, read N- to C-terminus: GMP reductase (328 aa).

Cys-176 (thioimidate intermediate) is an active-site residue. NADP(+) is bound at residue 205 to 228; it reads IIADGGIRTHGDVAKSIRFGATMV.

This sequence belongs to the IMPDH/GMPR family. GuaC type 2 subfamily.

It catalyses the reaction IMP + NH4(+) + NADP(+) = GMP + NADPH + 2 H(+). In terms of biological role, catalyzes the irreversible NADPH-dependent deamination of GMP to IMP. It functions in the conversion of nucleobase, nucleoside and nucleotide derivatives of G to A nucleotides, and in maintaining the intracellular balance of A and G nucleotides. The sequence is that of GMP reductase from Bacillus thuringiensis (strain Al Hakam).